Here is a 250-residue protein sequence, read N- to C-terminus: 23S rRNA (guanosine-2'-O-)-methyltransferase RlmB (250 aa).

Residues Gly-198, Ile-218, and Leu-227 each coordinate S-adenosyl-L-methionine.

Belongs to the class IV-like SAM-binding methyltransferase superfamily. RNA methyltransferase TrmH family. RlmB subfamily.

The protein resides in the cytoplasm. The catalysed reaction is guanosine(2251) in 23S rRNA + S-adenosyl-L-methionine = 2'-O-methylguanosine(2251) in 23S rRNA + S-adenosyl-L-homocysteine + H(+). Its function is as follows. Specifically methylates the ribose of guanosine 2251 in 23S rRNA. In Coxiella burnetii (strain RSA 493 / Nine Mile phase I), this protein is 23S rRNA (guanosine-2'-O-)-methyltransferase RlmB.